A 396-amino-acid chain; its full sequence is Elongation factor Tu (396 aa).

The tr-type G domain maps to 11–205 (KPHVNIGTIG…TVDEYIPTPE (195 aa)). Positions 20 to 27 (GHVDHGKT) are G1. 20 to 27 (GHVDHGKT) provides a ligand contact to GTP. Thr27 contacts Mg(2+). A G2 region spans residues 61–65 (GITIN). A G3 region spans residues 82–85 (DAPG). Residues 82-86 (DAPGH) and 137-140 (NKCD) contribute to the GTP site. The G4 stretch occupies residues 137–140 (NKCD). Residues 175-177 (SAL) form a G5 region.

This sequence belongs to the TRAFAC class translation factor GTPase superfamily. Classic translation factor GTPase family. EF-Tu/EF-1A subfamily. As to quaternary structure, monomer.

It is found in the cytoplasm. The catalysed reaction is GTP + H2O = GDP + phosphate + H(+). In terms of biological role, GTP hydrolase that promotes the GTP-dependent binding of aminoacyl-tRNA to the A-site of ribosomes during protein biosynthesis. This is Elongation factor Tu from Lactobacillus helveticus (strain DPC 4571).